The chain runs to 249 residues: tRNA (guanine-N(1)-)-methyltransferase (249 aa).

Residues Gly-113 and 133 to 138 (IGDFVV) contribute to the S-adenosyl-L-methionine site.

The protein belongs to the RNA methyltransferase TrmD family. In terms of assembly, homodimer.

Its subcellular location is the cytoplasm. It catalyses the reaction guanosine(37) in tRNA + S-adenosyl-L-methionine = N(1)-methylguanosine(37) in tRNA + S-adenosyl-L-homocysteine + H(+). Functionally, specifically methylates guanosine-37 in various tRNAs. The protein is tRNA (guanine-N(1)-)-methyltransferase of Neisseria meningitidis serogroup C (strain 053442).